Reading from the N-terminus, the 172-residue chain is Translation initiation factor IF-3 (172 aa).

This sequence belongs to the IF-3 family. In terms of assembly, monomer.

It localises to the cytoplasm. Its function is as follows. IF-3 binds to the 30S ribosomal subunit and shifts the equilibrium between 70S ribosomes and their 50S and 30S subunits in favor of the free subunits, thus enhancing the availability of 30S subunits on which protein synthesis initiation begins. In Geobacter metallireducens (strain ATCC 53774 / DSM 7210 / GS-15), this protein is Translation initiation factor IF-3.